The sequence spans 564 residues: Cysteine--tRNA ligase CPS1, chloroplastic/mitochondrial (564 aa).

Residues 1–43 (MAAAVVVRRAAGLIPLLSSRFGARMPLHRALSQIPPPRFCRLL) constitute a chloroplast and mitochondrion transit peptide. C93 contacts Zn(2+). The short motif at 95–105 (VTPYDDSHIGH) is the 'HIGH' region element. Zn(2+) is bound by residues C273, H298, and E302. A 'KMSKS' region motif is present at residues 330–334 (KMSKS). K333 is an ATP binding site.

It belongs to the class-I aminoacyl-tRNA synthetase family. Zn(2+) serves as cofactor.

The protein localises to the plastid. Its subcellular location is the chloroplast. The protein resides in the mitochondrion. It catalyses the reaction tRNA(Cys) + L-cysteine + ATP = L-cysteinyl-tRNA(Cys) + AMP + diphosphate. In terms of biological role, nuclear genome-encoded factor required for normal assembly of chloroplast polysomes. The polypeptide is Cysteine--tRNA ligase CPS1, chloroplastic/mitochondrial (Zea mays (Maize)).